Reading from the N-terminus, the 644-residue chain is 1-deoxy-D-xylulose-5-phosphate synthase (644 aa).

Residues His78 and 120 to 122 each bind thiamine diphosphate; that span reads GHA. Asp149 serves as a coordination point for Mg(2+). Thiamine diphosphate-binding positions include 150 to 151, Asn178, and Glu373; that span reads AA. Asn178 lines the Mg(2+) pocket.

Belongs to the transketolase family. DXPS subfamily. As to quaternary structure, homodimer. It depends on Mg(2+) as a cofactor. Thiamine diphosphate serves as cofactor.

It carries out the reaction D-glyceraldehyde 3-phosphate + pyruvate + H(+) = 1-deoxy-D-xylulose 5-phosphate + CO2. It functions in the pathway metabolic intermediate biosynthesis; 1-deoxy-D-xylulose 5-phosphate biosynthesis; 1-deoxy-D-xylulose 5-phosphate from D-glyceraldehyde 3-phosphate and pyruvate: step 1/1. Catalyzes the acyloin condensation reaction between C atoms 2 and 3 of pyruvate and glyceraldehyde 3-phosphate to yield 1-deoxy-D-xylulose-5-phosphate (DXP). The chain is 1-deoxy-D-xylulose-5-phosphate synthase from Chlamydia abortus (strain DSM 27085 / S26/3) (Chlamydophila abortus).